A 320-amino-acid chain; its full sequence is L-lactate dehydrogenase (320 aa).

NAD(+)-binding positions include V19, D40, R45, and 85–86 (GA). Substrate-binding residues include Q88 and R94. Residues S107, 124 to 126 (ITN), and S149 each bind NAD(+). A substrate-binding site is contributed by 126-129 (NPVD). Position 154–157 (154–157 (DSAR)) interacts with substrate. Beta-D-fructose 1,6-bisphosphate is bound by residues R159 and H174. The active-site Proton acceptor is H181. Residue Y228 is modified to Phosphotyrosine. T237 provides a ligand contact to substrate.

Belongs to the LDH/MDH superfamily. LDH family. As to quaternary structure, homotetramer.

The protein resides in the cytoplasm. It carries out the reaction (S)-lactate + NAD(+) = pyruvate + NADH + H(+). It participates in fermentation; pyruvate fermentation to lactate; (S)-lactate from pyruvate: step 1/1. Its activity is regulated as follows. Allosterically activated by fructose 1,6-bisphosphate (FBP). Catalyzes the conversion of lactate to pyruvate. This Bifidobacterium animalis subsp. lactis (strain AD011) protein is L-lactate dehydrogenase.